The chain runs to 305 residues: Outer membrane protein assembly factor BamD (305 aa).

An N-terminal signal peptide occupies residues 1 to 24 (MLRIFQGRPAVTIAAVLVAASVAG). Cysteine 25 is lipidated: N-palmitoyl cysteine. Cysteine 25 carries S-diacylglycerol cysteine lipidation. TPR repeat units lie at residues 41 to 74 (VELL…HPYS), 78 to 111 (RRSI…YPGN), 113 to 136 (SAQY…NRDQ), and 174 to 207 (AGKE…HQTT).

It belongs to the BamD family. In terms of assembly, part of the Bam complex.

The protein resides in the cell outer membrane. Its function is as follows. Part of the outer membrane protein assembly complex, which is involved in assembly and insertion of beta-barrel proteins into the outer membrane. The polypeptide is Outer membrane protein assembly factor BamD (Caulobacter vibrioides (strain ATCC 19089 / CIP 103742 / CB 15) (Caulobacter crescentus)).